A 948-amino-acid polypeptide reads, in one-letter code: Bifunctional glutamine synthetase adenylyltransferase/adenylyl-removing enzyme (948 aa).

Residues 1–447 (MLTPDNKLMS…EFQQVVGAES (447 aa)) form an adenylyl removase region. The interval 453 to 948 (EQGLQVLWQD…NCWNHLLEDD (496 aa)) is adenylyl transferase.

Belongs to the GlnE family. Mg(2+) is required as a cofactor.

It carries out the reaction [glutamine synthetase]-O(4)-(5'-adenylyl)-L-tyrosine + phosphate = [glutamine synthetase]-L-tyrosine + ADP. It catalyses the reaction [glutamine synthetase]-L-tyrosine + ATP = [glutamine synthetase]-O(4)-(5'-adenylyl)-L-tyrosine + diphosphate. Its function is as follows. Involved in the regulation of glutamine synthetase GlnA, a key enzyme in the process to assimilate ammonia. When cellular nitrogen levels are high, the C-terminal adenylyl transferase (AT) inactivates GlnA by covalent transfer of an adenylyl group from ATP to specific tyrosine residue of GlnA, thus reducing its activity. Conversely, when nitrogen levels are low, the N-terminal adenylyl removase (AR) activates GlnA by removing the adenylyl group by phosphorolysis, increasing its activity. The regulatory region of GlnE binds the signal transduction protein PII (GlnB) which indicates the nitrogen status of the cell. The chain is Bifunctional glutamine synthetase adenylyltransferase/adenylyl-removing enzyme from Idiomarina loihiensis (strain ATCC BAA-735 / DSM 15497 / L2-TR).